Reading from the N-terminus, the 140-residue chain is Large ribosomal subunit protein uL14x/uL14z/uL14y (140 aa).

Belongs to the universal ribosomal protein uL14 family.

The polypeptide is Large ribosomal subunit protein uL14x/uL14z/uL14y (RPL23A) (Arabidopsis thaliana (Mouse-ear cress)).